The following is a 294-amino-acid chain: UDP-3-O-acyl-N-acetylglucosamine deacetylase (294 aa).

Positions 75, 232, and 236 each coordinate Zn(2+). Histidine 259 functions as the Proton donor in the catalytic mechanism.

This sequence belongs to the LpxC family. Zn(2+) serves as cofactor.

It catalyses the reaction a UDP-3-O-[(3R)-3-hydroxyacyl]-N-acetyl-alpha-D-glucosamine + H2O = a UDP-3-O-[(3R)-3-hydroxyacyl]-alpha-D-glucosamine + acetate. It functions in the pathway glycolipid biosynthesis; lipid IV(A) biosynthesis; lipid IV(A) from (3R)-3-hydroxytetradecanoyl-[acyl-carrier-protein] and UDP-N-acetyl-alpha-D-glucosamine: step 2/6. Catalyzes the hydrolysis of UDP-3-O-myristoyl-N-acetylglucosamine to form UDP-3-O-myristoylglucosamine and acetate, the committed step in lipid A biosynthesis. This chain is UDP-3-O-acyl-N-acetylglucosamine deacetylase, found in Campylobacter jejuni subsp. doylei (strain ATCC BAA-1458 / RM4099 / 269.97).